A 244-amino-acid polypeptide reads, in one-letter code: Maintenance of ploidy protein mob2 (244 aa).

Residues 14-45 form a disordered region; sequence NRSKRHQNLSDASSSSGSFSKKSSTSQLVRTG. The segment covering 23 to 39 has biased composition (low complexity); the sequence is SDASSSSGSFSKKSSTS. Residues S46 and S48 each carry the phosphoserine modification.

Belongs to the MOB1/phocein family. As to quaternary structure, interacts with orb6.

The protein resides in the cytoplasm. The protein localises to the cell cortex. Its function is as follows. Required for coordinating polarized cell growth during interphase with the onset of mitosis. The sequence is that of Maintenance of ploidy protein mob2 (mob2) from Schizosaccharomyces pombe (strain 972 / ATCC 24843) (Fission yeast).